Reading from the N-terminus, the 119-residue chain is Large ribosomal subunit protein bL19 (119 aa).

It belongs to the bacterial ribosomal protein bL19 family.

Functionally, this protein is located at the 30S-50S ribosomal subunit interface and may play a role in the structure and function of the aminoacyl-tRNA binding site. The chain is Large ribosomal subunit protein bL19 from Psychromonas ingrahamii (strain DSM 17664 / CCUG 51855 / 37).